The chain runs to 519 residues: MDVEGAFADEEELAPHGGWASADFDPAEFGYEDSDDDFDAEDFDETEFSNPDFGEDYSDEDWEEIETAFGFDPSHLEEALCTVAIVGRPNVGKSTLVNRFIGRREAVVEDFPGVTRDRISYISDWGGHRFWVQDTGGWDPNVKGIHASIAQQAEVAMSTADVIVFVVDTKVGITETDSVMAAKLLRSEVPVILVANKFDSDSQWADMAEFYSLGLGDPYPVSAQHGRGGADVLDKVLELFPEEPRSKSIVEGPRRVALVGKPNVGKSSLLNKFAGETRSVVDNVAGTTVDPVDSLIQLDQKLWKFVDTAGLRKKVKTASGHEYYASLRTHGAIDAAELCVLLIDSSEPITEQDQRVLAMITDAGKALVIAFNKWDLMDEDRRIDLDRELDLQLAHVPWAKRINISAKTGRALQRLEPAMLEALDNWDRRISTGQLNTWLREAIAANPPPMRGGRLPRVLFATQASTQPPVIVLFTTGFLEAGYRRYLERKFRERFGFEGTPVRIAVRVRERRGKGGNKQ.

Composition is skewed to acidic residues over residues Met1 to Glu12 and Gly30 to Gly54. The segment at Met1–Gly54 is disordered. EngA-type G domains follow at residues Cys81–Pro244 and Arg254–Asp427. Residues Gly87 to Ser94, Asp134 to Trp138, Asn196 to Asp199, Gly260 to Ser267, Asp307 to Leu311, and Asn372 to Asp375 contribute to the GTP site. Residues Arg428–Glu510 enclose the KH-like domain.

The protein belongs to the TRAFAC class TrmE-Era-EngA-EngB-Septin-like GTPase superfamily. EngA (Der) GTPase family. Associates with the 50S ribosomal subunit.

Functionally, GTPase that plays an essential role in the late steps of ribosome biogenesis. The polypeptide is GTPase Der (Corynebacterium glutamicum (strain ATCC 13032 / DSM 20300 / JCM 1318 / BCRC 11384 / CCUG 27702 / LMG 3730 / NBRC 12168 / NCIMB 10025 / NRRL B-2784 / 534)).